A 105-amino-acid chain; its full sequence is Resistin-like beta (105 aa).

The signal sequence occupies residues 1 to 23 (MKPTLCFLFILVSLFPLIVPGNA). 5 disulfides stabilise this stretch: Cys-49-Cys-102, Cys-61-Cys-101, Cys-70-Cys-87, Cys-72-Cys-89, and Cys-76-Cys-91.

This sequence belongs to the resistin/FIZZ family. Homodimer; disulfide-linked. Heterodimer with RETNLG. In terms of tissue distribution, strongly expressed in colon, and at lower levels in ileum. In colon, found throughout the crypt and surface epithelium and in goblet cells (at protein level). Specific to the gastrointestinal tract; not detected in other tissues tested.

It localises to the secreted. Functionally, probable hormone. The polypeptide is Resistin-like beta (Retnlb) (Mus musculus (Mouse)).